The chain runs to 134 residues: uncharacterized protein (134 aa).

Residues 4–107 (IFTKIINREL…PTHSLSNFSF (104 aa)) form the HIT domain. Residues 91 to 95 (HLHIH) carry the Histidine triad motif motif.

This is an uncharacterized protein from Mycobacterium leprae (strain TN).